The chain runs to 829 residues: FAST kinase domain-containing protein 1, mitochondrial (829 aa).

Lysine 346 is subject to N6-acetyllysine. The RAP domain maps to 761–821 (IAIELLDVRA…KDARMDYLRE (61 aa)).

It belongs to the FAST kinase family. Expression detected in spleen, testis, colon, heart, smooth muscle, kidney, brain, lung, liver, brown and white adipose tissue with highest expression in heart and brown adipose tissue.

Its subcellular location is the mitochondrion. Involved in the down-regulation of mitochondrial MT-ND3 mRNA levels which leads to decreased respiratory complex I abundance and activity. This Mus musculus (Mouse) protein is FAST kinase domain-containing protein 1, mitochondrial (Fastkd1).